A 1412-amino-acid polypeptide reads, in one-letter code: DNA-directed RNA polymerase subunit beta' (1412 aa).

Residues C70, C72, C85, and C88 each coordinate Zn(2+). Mg(2+) contacts are provided by D460, D462, and D464. Zn(2+) is bound by residues C819, C893, C900, and C903. A disordered region spans residues 1391–1412 (AEESFEFGTPETPAAEQQHSGE).

The protein belongs to the RNA polymerase beta' chain family. The RNAP catalytic core consists of 2 alpha, 1 beta, 1 beta' and 1 omega subunit. When a sigma factor is associated with the core the holoenzyme is formed, which can initiate transcription. Requires Mg(2+) as cofactor. The cofactor is Zn(2+).

It catalyses the reaction RNA(n) + a ribonucleoside 5'-triphosphate = RNA(n+1) + diphosphate. In terms of biological role, DNA-dependent RNA polymerase catalyzes the transcription of DNA into RNA using the four ribonucleoside triphosphates as substrates. The polypeptide is DNA-directed RNA polymerase subunit beta' (Paraburkholderia phytofirmans (strain DSM 17436 / LMG 22146 / PsJN) (Burkholderia phytofirmans)).